The following is a 402-amino-acid chain: UPF0261 protein BPP1817 (402 aa).

Belongs to the UPF0261 family.

The polypeptide is UPF0261 protein BPP1817 (Bordetella parapertussis (strain 12822 / ATCC BAA-587 / NCTC 13253)).